Consider the following 470-residue polypeptide: MEKAHADEFPLTTDSSEKQGVVCIFGTGDFGKSLGLKMLQCGYSIVFGSRNPQVSSLLPRGAEVLSYSEAASKSDIIILAMHREHYDSLTELVDYLKGKVLVDVSNNRKINQYPESNAEYLAQLEPGAHVVKAFNTISAWALQSGTLDASRQVFVCGNDSKAKQRVMDIARTLGLTPLDQGSLMAASEIENYPLQLFPMWRFPFYLSSVLCVFFFVYCAIREVIYPYVNGKTDATYRLAISIPNRVFPITALILLALVYLPGILAAILQLYRGTKYRRFPNWLDHWMLCRKQLGLVALGFAFLHVIYTLVIPIRYYVRWRLRNATITQALTNKDSPFITSYAWINDSYLALGILGFFLFLLLGITSLPSVSNMVNWREFRFVQSKLGYLTLVLCTAHTLVYGGKRFLSPSILRWSLPSAYILALVIPCAVLVLKCILIMPCIDKTLTRIRQGWERNSKYTQSALNGKSDI.

NADP(+)-binding positions include 27–30, 49–50, Tyr-67, 81–85, Asn-106, and Ala-139; these read TGDF, SR, and MHREH. FAD is bound by residues Trp-140 and Asp-148. An NADP(+)-binding site is contributed by Arg-171. Helical transmembrane passes span 202–224 and 236–256; these read FPFY…REVI and YRLA…ILLA. Tyr-217 is a binding site for Fe(3+). The Ferric oxidoreductase domain maps to 247–395; that stretch reads FPITALILLA…LGYLTLVLCT (149 aa). Positions 269 and 290 each coordinate FAD. Helical transmembrane passes span 293 to 313 and 342 to 362; these read LGLV…VIPI and AWIN…FLLL. His-304 is a heme b binding site. Tyr-307 is a binding site for Fe(3+). FAD contacts are provided by Ser-366 and Gln-383. Transmembrane regions (helical) follow at residues 381 to 401 and 419 to 439; these read FVQS…TLVY and AYIL…ILIM. Residue His-397 participates in heme b binding.

This sequence belongs to the STEAP family. In terms of assembly, homotrimer. Interacts with PTK2/FAK1; the interaction may regulate PTK2 phosphorylation. Requires FAD as cofactor. The cofactor is heme b. Expressed in white and brown adipose tissues cells, as well as in muscle and liver cells. Detected in joints and spleens of arthritic mice.

Its subcellular location is the cell membrane. It localises to the golgi apparatus membrane. It is found in the early endosome membrane. The enzyme catalyses 2 Fe(2+) + NADP(+) + H(+) = 2 Fe(3+) + NADPH. The catalysed reaction is 2 Cu(+) + NADP(+) + H(+) = 2 Cu(2+) + NADPH. Functionally, integral membrane protein that functions as a NADPH-dependent ferric-chelate reductase, using NADPH from one side of the membrane to reduce a Fe(3+) chelate that is bound on the other side of the membrane. Mediates sequential transmembrane electron transfer from NADPH to FAD and onto heme, and finally to the Fe(3+) chelate. Can also reduce Cu(2+) to Cu(1+). Plays a role in systemic metabolic homeostasis, integrating inflammatory and metabolic responses. Associated with obesity and insulin-resistance. Involved in inflammatory arthritis, through the regulation of inflammatory cytokines. Inhibits anchorage-independent cell proliferation. This chain is Metalloreductase STEAP4 (Steap4), found in Mus musculus (Mouse).